Reading from the N-terminus, the 135-residue chain is Transcriptional regulator HosA (135 aa).

Positions 4–134 constitute an HTH marR-type domain; it reads RNKAFHQLRQ…FVQLVRKMMN (131 aa). Residues 48-71 constitute a DNA-binding region (H-T-H motif); sequence QVALIEAAVSTKATLAEMLARMEN.

In terms of biological role, involved in the temperature-dependent positive control of flagellum-driven swimming motility and cellular aggregation. Regulates fliC expression by directly interacting with fliC promoter. In Escherichia coli O157:H7, this protein is Transcriptional regulator HosA (hosA).